Consider the following 113-residue polypeptide: Small ribosomal subunit protein bS6 (113 aa).

It belongs to the bacterial ribosomal protein bS6 family.

Binds together with bS18 to 16S ribosomal RNA. The protein is Small ribosomal subunit protein bS6 of Pseudoalteromonas translucida (strain TAC 125).